The following is an 88-amino-acid chain: UPF0298 protein BA_4142/GBAA_4142/BAS3844 (88 aa).

This sequence belongs to the UPF0298 family.

It localises to the cytoplasm. This Bacillus anthracis protein is UPF0298 protein BA_4142/GBAA_4142/BAS3844.